The chain runs to 222 residues: Cytochrome b6 (222 aa).

Residues 39–59 (IFYCLGGLTLTCFLIQFATGF) traverse the membrane as a helical segment. Tyr-41 contacts heme b. Heme c is bound at residue Cys-42. Positions 90, 93, 94, 107, and 110 each coordinate heme b. A run of 3 helical transmembrane segments spans residues 97–117 (ASMM…TGGF), 123–143 (LTWV…VTGY), and 193–213 (LHTF…FLMI). Residues His-194 and His-209 each coordinate heme b. Positions 214 and 218 each coordinate heme c. A heme b-binding site is contributed by Ser-219.

Belongs to the cytochrome b family. PetB subfamily. The 4 large subunits of the cytochrome b6-f complex are cytochrome b6, subunit IV (17 kDa polypeptide, PetD), cytochrome f and the Rieske protein, while the 4 small subunits are PetG, PetL, PetM and PetN. The complex functions as a dimer. Heme b is required as a cofactor. Requires heme c as cofactor.

The protein localises to the cellular thylakoid membrane. In terms of biological role, component of the cytochrome b6-f complex, which mediates electron transfer between photosystem II (PSII) and photosystem I (PSI), cyclic electron flow around PSI, and state transitions. This Synechocystis sp. (strain ATCC 27184 / PCC 6803 / Kazusa) protein is Cytochrome b6.